A 362-amino-acid chain; its full sequence is Transcription factor Sox-18 (362 aa).

Positions 1-13 (MHRPEPSYCREEP) are enriched in basic and acidic residues. Positions 1-68 (MHRPEPSYCR…CEEKPGDPRI (68 aa)) are disordered. Residues 37–51 (PSSPPAPDSPTPSPQ) are compositionally biased toward pro residues. Over residues 59-68 (CEEKPGDPRI) the composition is skewed to basic and acidic residues. Residues 68–136 (IRRPMNAFMV…QHLQDHPNYK (69 aa)) constitute a DNA-binding region (HMG box). 2 interaction with DNA regions span residues 70–83 (RPMN…KDER) and 94–106 (HNAV…GQSW). Positions 129-159 (LQDHPNYKYRPRRKKQAKKLKRVDPSPLLRN) are disordered. The span at 135 to 149 (YKYRPRRKKQAKKLK) shows a compositional bias: basic residues. The tract at residues 149–209 (KRVDPSPLLR…VVEPSEPAFF (61 aa)) is important for transcriptional activation. The 127-residue stretch at 235-361 (KTLREISLPY…TAMYYTPCIT (127 aa)) folds into the Sox C-terminal domain. The short motif at 307–315 (NEFDQYLNM) is the 9aaTAD element.

It localises to the nucleus. Transcription factor. Binds to the consensus DNA sequence 5'-AACAAT-3'. Also binds 5'-CACAAT-3' and 5'-AATAAT-3' but with a lower affinity. Acts partially redundantly with sox7 during cardiogenesis, acting indirectly through nodal-signaling to induce mesodermal, organizer and endodermal tissues, which then interact to initiate cardiogenesis. Also acts as an antagonist of beta-catenin signaling. The polypeptide is Transcription factor Sox-18 (Xenopus tropicalis (Western clawed frog)).